A 354-amino-acid chain; its full sequence is Biotin synthase (354 aa).

One can recognise a Radical SAM core domain in the interval 41-265; the sequence is NEVQISRLLS…IMPHSRVRLS (225 aa). Positions 56, 60, and 63 each coordinate [4Fe-4S] cluster. [2Fe-2S] cluster-binding residues include cysteine 100, cysteine 131, cysteine 191, and arginine 263.

Belongs to the radical SAM superfamily. Biotin synthase family. In terms of assembly, homodimer. [4Fe-4S] cluster serves as cofactor. [2Fe-2S] cluster is required as a cofactor.

The enzyme catalyses (4R,5S)-dethiobiotin + (sulfur carrier)-SH + 2 reduced [2Fe-2S]-[ferredoxin] + 2 S-adenosyl-L-methionine = (sulfur carrier)-H + biotin + 2 5'-deoxyadenosine + 2 L-methionine + 2 oxidized [2Fe-2S]-[ferredoxin]. It participates in cofactor biosynthesis; biotin biosynthesis; biotin from 7,8-diaminononanoate: step 2/2. Functionally, catalyzes the conversion of dethiobiotin (DTB) to biotin by the insertion of a sulfur atom into dethiobiotin via a radical-based mechanism. The protein is Biotin synthase of Shewanella sediminis (strain HAW-EB3).